Here is an 80-residue protein sequence, read N- to C-terminus: Protein Vpu (80 aa).

Over 1–7 the chain is Extracellular; that stretch reads MLSLQIL. Residues 8-28 form a helical membrane-spanning segment; it reads AIVALVVAAIIAIVVWSIVFI. The Cytoplasmic segment spans residues 29 to 80; that stretch reads EYRKILRQRKIDRLIDRIREREEDSGNESEGDQEELAALERGHLAPWDVDDL. The segment at 49–80 is disordered; that stretch reads REEDSGNESEGDQEELAALERGHLAPWDVDDL. A phosphoserine; by host CK2 mark is found at Ser-53 and Ser-57. The segment covering 53 to 65 has biased composition (acidic residues); sequence SGNESEGDQEELA.

The protein belongs to the HIV-1 VPU protein family. In terms of assembly, homopentamer. Interacts with host CD4 and BRTC; these interactions induce proteasomal degradation of CD4. Interacts with host BST2; this interaction leads to the degradation of host BST2. Interacts with host FBXW11. Interacts with host AP1M1; this interaction plays a role in the mistrafficking and subsequent degradation of host BST2. Interacts with host RANBP2; this interaction allows Vpu to down-regulate host BLM sumoylation. In terms of processing, phosphorylated by host CK2. This phosphorylation is necessary for interaction with human BTRC and degradation of CD4.

It localises to the host membrane. Its activity is regulated as follows. Ion channel activity is inhibited by hexamethylene amiloride in vitro. Its function is as follows. Enhances virion budding by targeting host CD4 and Tetherin/BST2 to proteasome degradation. Degradation of CD4 prevents any unwanted premature interactions between viral Env and its host receptor CD4 in the endoplasmic reticulum. Degradation of antiretroviral protein Tetherin/BST2 is important for virion budding, as BST2 tethers new viral particles to the host cell membrane. Mechanistically, Vpu bridges either CD4 or BST2 to BTRC, a substrate recognition subunit of the Skp1/Cullin/F-box protein E3 ubiquitin ligase, induces their ubiquitination and subsequent proteasomal degradation. The alteration of the E3 ligase specificity by Vpu seems to promote the degradation of host IKBKB, leading to NF-kappa-B down-regulation and subsequent apoptosis. Acts as a viroporin that forms an oligomeric ion channel in membranes. Modulates the host DNA repair mechanisms to promote degradation of nuclear viral cDNA in cells that are already productively infected in order to suppress immune sensing and proviral hyper-integration (superinfection). Manipulates PML-NBs and modulates SUMOylation of host BLM protein thereby enhancing its DNA-end processing activity toward viral unintegrated linear DNA. Also inhibits RAD52-mediated homologous repair of viral cDNA, preventing the generation of dead-end circular forms of single copies of the long terminal repeat and permitting sustained nucleolytic attack. The chain is Protein Vpu from Human immunodeficiency virus type 1 group M subtype B (strain 89.6) (HIV-1).